The sequence spans 314 residues: (+)-neomenthol dehydrogenase (314 aa).

13–36 (VTGGNKGIGYETCRQLASKGVVVV) serves as a coordination point for NADP(+). Residue Ser-183 participates in substrate binding. The Proton acceptor role is filled by Tyr-239.

This sequence belongs to the short-chain dehydrogenases/reductases (SDR) family. Monomer. In terms of tissue distribution, expressed in flowers and red fruit tissues. Not detected in leaves, stems, roots or green fruits.

The catalysed reaction is (+)-neomenthol + NADP(+) = (1R,4S)-menthone + NADPH + H(+). Involved in basal resistance against pathogens. This is (+)-neomenthol dehydrogenase (MNR1) from Capsicum annuum (Capsicum pepper).